The sequence spans 274 residues: 23S rRNA (adenosine(1067)-2'-O)-methyltransferase (274 aa).

S-adenosyl-L-methionine contacts are provided by residues arginine 165, leucine 195, 218 to 220, 238 to 240, and 247 to 252; these read GSE, IPM, and LNVSVS.

Belongs to the class IV-like SAM-binding methyltransferase superfamily. RNA methyltransferase TsnR/AvirB family. Homodimer.

The catalysed reaction is adenosine(1067) in 23S rRNA + S-adenosyl-L-methionine = 2'-O-methyladenosine(1067) in 23S rRNA + S-adenosyl-L-homocysteine + H(+). Its function is as follows. Specifically methylates the adenosine-1067 in 23S ribosomal RNA. Confers resistance to antibiotic nosiheptide. In Streptomyces actuosus, this protein is 23S rRNA (adenosine(1067)-2'-O)-methyltransferase.